A 211-amino-acid chain; its full sequence is Intermembrane phospholipid transport system binding protein MlaC (211 aa).

The first 21 residues, 1-21, serve as a signal peptide directing secretion; sequence MFKRLMMVALLVIAPLSAATA.

It belongs to the MlaC/ttg2D family. Interacts with the MlaA-OmpF outer membrane complex and with the inner membrane ABC transporter complex MlaFEDB, via direct interaction with MlaD.

It localises to the periplasm. In terms of biological role, involved in a phospholipid transport pathway that maintains lipid asymmetry in the outer membrane by retrograde trafficking of phospholipids from the outer membrane to the inner membrane. May transfer phospholipid across the periplasmic space and deliver it to the MlaFEDB complex at the inner membrane. This Escherichia coli (strain K12) protein is Intermembrane phospholipid transport system binding protein MlaC.